Here is a 279-residue protein sequence, read N- to C-terminus: Ribosomal RNA small subunit methyltransferase J (279 aa).

Residues 138–139 (ER) and D194 each bind S-adenosyl-L-methionine.

It belongs to the methyltransferase superfamily. RsmJ family.

Its subcellular location is the cytoplasm. It carries out the reaction guanosine(1516) in 16S rRNA + S-adenosyl-L-methionine = N(2)-methylguanosine(1516) in 16S rRNA + S-adenosyl-L-homocysteine + H(+). Its function is as follows. Specifically methylates the guanosine in position 1516 of 16S rRNA. This is Ribosomal RNA small subunit methyltransferase J from Acinetobacter baumannii (strain ATCC 17978 / DSM 105126 / CIP 53.77 / LMG 1025 / NCDC KC755 / 5377).